Consider the following 240-residue polypeptide: Transmembrane emp24 domain-containing protein 6 (240 aa).

The N-terminal stretch at 1 to 21 (MFPLLFVAGLVVLNLVSSARS) is a signal peptide. Over 22-200 (QKTEPLSGTG…FFLLQSNYNY (179 aa)) the chain is Lumenal. Residues 53 to 138 (TECFWQFAHQ…SVQVYLNFGV (86 aa)) form the GOLD domain. N-linked (GlcNAc...) asparagine glycans are attached at residues N107 and N156. A helical transmembrane segment spans residues 201–223 (VNWWSTAQSLVIVLSGILQLYFL). At 224-240 (KRLFNTPMTTETQKPRC) the chain is on the cytoplasmic side.

The protein belongs to the EMP24/GP25L family.

It localises to the endoplasmic reticulum membrane. This Bos taurus (Bovine) protein is Transmembrane emp24 domain-containing protein 6 (TMED6).